The chain runs to 635 residues: 1-deoxy-D-xylulose-5-phosphate synthase (635 aa).

Residues His-77 and 118-120 (GHA) contribute to the thiamine diphosphate site. Asp-149 provides a ligand contact to Mg(2+). Residues 150-151 (GS), Asn-178, Phe-290, and Glu-375 each bind thiamine diphosphate. Residue Asn-178 participates in Mg(2+) binding.

The protein belongs to the transketolase family. DXPS subfamily. As to quaternary structure, homodimer. The cofactor is Mg(2+). Thiamine diphosphate is required as a cofactor.

It catalyses the reaction D-glyceraldehyde 3-phosphate + pyruvate + H(+) = 1-deoxy-D-xylulose 5-phosphate + CO2. The protein operates within metabolic intermediate biosynthesis; 1-deoxy-D-xylulose 5-phosphate biosynthesis; 1-deoxy-D-xylulose 5-phosphate from D-glyceraldehyde 3-phosphate and pyruvate: step 1/1. Catalyzes the acyloin condensation reaction between C atoms 2 and 3 of pyruvate and glyceraldehyde 3-phosphate to yield 1-deoxy-D-xylulose-5-phosphate (DXP). This Chlorobium phaeovibrioides (strain DSM 265 / 1930) (Prosthecochloris vibrioformis (strain DSM 265)) protein is 1-deoxy-D-xylulose-5-phosphate synthase.